A 157-amino-acid polypeptide reads, in one-letter code: Small ribosomal subunit protein uS7 (157 aa).

Belongs to the universal ribosomal protein uS7 family. As to quaternary structure, part of the 30S ribosomal subunit. Contacts proteins S9 and S11.

Functionally, one of the primary rRNA binding proteins, it binds directly to 16S rRNA where it nucleates assembly of the head domain of the 30S subunit. Is located at the subunit interface close to the decoding center, probably blocks exit of the E-site tRNA. The chain is Small ribosomal subunit protein uS7 from Borreliella burgdorferi (strain ATCC 35210 / DSM 4680 / CIP 102532 / B31) (Borrelia burgdorferi).